The chain runs to 732 residues: Protein DIA2 (732 aa).

TPR repeat units lie at residues 15-48 (VLKA…CDSY), 78-111 (IKIL…EPGN), and 113-145 (KCYI…CNND). In terms of domain architecture, F-box spans 204-251 (TDLVGNLPIEILPIIFQRFTTKELVTLSLVCNKWRDKILYHLDCFQEF). The residue at position 393 (Ser-393) is a Phosphoserine. LRR repeat units lie at residues 425-449 (LEKI…LLRG), 480-505 (FPDL…LLKF), 509-532 (WKNL…DEDQ), 550-574 (LQNL…LCEQ), 579-602 (GRKL…HAHT), 616-637 (LSKL…TMKS), and 645-669 (LENL…EFLK).

The protein belongs to the DIA2 family. In terms of assembly, component of the SCF(DIA2) complex containing CDC53, SKP1, RBX1 and DIA2. Interacts with SKP1.

It is found in the nucleus. F-box protein component of a SCF (SKP1-CUL1-F-box protein) E3 ubiquitin-protein ligase complex which mediates the ubiquitination and subsequent proteasomal degradation of target proteins. Probably recognizes and binds to phosphorylated target proteins. The SCF(DIA2) complex is specifically involved in the pheromone induced degradation of phosphorylated TEC1. The SCF(DIA2) complex binds to DNA replication origins. Involved in DNA replication, genome stability, and the control of cell cycle, probably through its association to replication origins to facilitate the ubiquitination of another origin-binding protein. Required for invasive growth and growth under alkaline conditions. The sequence is that of Protein DIA2 (DIA2) from Saccharomyces cerevisiae (strain ATCC 204508 / S288c) (Baker's yeast).